We begin with the raw amino-acid sequence, 360 residues long: Putative beta-glucosidase 15 (360 aa).

Basic and acidic residues-rich tracts occupy residues 1–11 (MARRRMGEEGK) and 47–67 (GRREEDDAGGREKGEKRERKG). Disordered regions lie at residues 1–21 (MARRRMGEEGKGGGWGLNGRQ) and 35–103 (GWRS…RAER). Basic residues predominate over residues 75–86 (GKRRRERRRGGR). Tyr183 is an a beta-D-glucoside binding site. A disulfide bridge connects residues Cys191 and Cys196. A beta-D-glucoside contacts are provided by residues Glu254, Trp301, 308–309 (EW), and Phe317. Glu254 (nucleophile) is an active-site residue. N-linked (GlcNAc...) asparagine glycosylation occurs at Asn346.

It belongs to the glycosyl hydrolase 1 family.

It carries out the reaction Hydrolysis of terminal, non-reducing beta-D-glucosyl residues with release of beta-D-glucose.. The sequence is that of Putative beta-glucosidase 15 (BGLU15) from Oryza sativa subsp. japonica (Rice).